The following is a 253-amino-acid chain: MANLGCWMLVLFVATWSDLGLCKKRPKPGGWNTGGSRYPGQGSPGGNRYPPQGGGGWGQPHGGGWGQPHGGGWGQPHGGGWGQPHGGGWGQGGGTHSQWNKPSKPKTNMKHMAGAAAAGAVVGGLGGYMLGSAMSRPIIHFGSDYEDRYYRENMHRYPNQVYYRPMDQYSNQNNFVHDCVNITIKQHTVTTTTKGENFTETDVKMMERVVEQMCITQYERESQAYYQRGSSMVLFSSPPVILLISFLIFLIVG.

Residues 1 to 22 (MANLGCWMLVLFVATWSDLGLC) form the signal peptide. The segment at 23 to 38 (KKRPKPGGWNTGGSRY) is interaction with ADGRG6. The tract at residues 23-230 (KKRPKPGGWN…ESQAYYQRGS (208 aa)) is interaction with GRB2, ERI3 and SYN1. Residues 26–108 (PKPGGWNTGG…WNKPSKPKTN (83 aa)) are disordered. A run of 5 repeats spans residues 51-59 (PQGGGGWGQ), 60-67 (PHGGGWGQ), 68-75 (PHGGGWGQ), 76-83 (PHGGGWGQ), and 84-91 (PHGGGWGQ). The tract at residues 51–91 (PQGGGGWGQPHGGGWGQPHGGGWGQPHGGGWGQPHGGGWGQ) is 5 X 8 AA tandem repeats of P-H-G-G-G-W-G-Q. Over residues 52 to 95 (QGGGGWGQPHGGGWGQPHGGGWGQPHGGGWGQPHGGGWGQGGGT) the composition is skewed to gly residues. The Cu(2+) site is built by histidine 61, glycine 62, glycine 63, histidine 69, glycine 70, glycine 71, histidine 77, glycine 78, glycine 79, histidine 85, glycine 86, and glycine 87. A disulfide bridge connects residues cysteine 179 and cysteine 214. Asparagine 181 and asparagine 197 each carry an N-linked (GlcNAc...) asparagine glycan. Serine 230 carries GPI-anchor amidated serine lipidation. A propeptide spans 231–253 (SMVLFSSPPVILLISFLIFLIVG) (removed in mature form).

Belongs to the prion family. Monomer and homodimer. Has a tendency to aggregate into amyloid fibrils containing a cross-beta spine, formed by a steric zipper of superposed beta-strands. Soluble oligomers may represent an intermediate stage on the path to fibril formation. Copper binding may promote oligomerization. Interacts with GRB2, APP, ERI3/PRNPIP and SYN1. Mislocalized cytosolically exposed PrP interacts with MGRN1; this interaction alters MGRN1 subcellular location and causes lysosomal enlargement. Interacts with APP. Interacts with KIAA1191. Interacts with ADGRG6.

The protein localises to the cell membrane. Its subcellular location is the golgi apparatus. Its primary physiological function is unclear. May play a role in neuronal development and synaptic plasticity. May be required for neuronal myelin sheath maintenance. May promote myelin homeostasis through acting as an agonist for ADGRG6 receptor. May play a role in iron uptake and iron homeostasis. Soluble oligomers are toxic to cultured neuroblastoma cells and induce apoptosis (in vitro). Association with GPC1 (via its heparan sulfate chains) targets PRNP to lipid rafts. Also provides Cu(2+) or Zn(2+) for the ascorbate-mediated GPC1 deaminase degradation of its heparan sulfate side chains. In Gorilla gorilla gorilla (Western lowland gorilla), this protein is Major prion protein (PRNP).